We begin with the raw amino-acid sequence, 428 residues long: Gamma-glutamyl phosphate reductase (428 aa).

The protein belongs to the gamma-glutamyl phosphate reductase family.

The protein localises to the cytoplasm. The catalysed reaction is L-glutamate 5-semialdehyde + phosphate + NADP(+) = L-glutamyl 5-phosphate + NADPH + H(+). The protein operates within amino-acid biosynthesis; L-proline biosynthesis; L-glutamate 5-semialdehyde from L-glutamate: step 2/2. Functionally, catalyzes the NADPH-dependent reduction of L-glutamate 5-phosphate into L-glutamate 5-semialdehyde and phosphate. The product spontaneously undergoes cyclization to form 1-pyrroline-5-carboxylate. The polypeptide is Gamma-glutamyl phosphate reductase (Agrobacterium fabrum (strain C58 / ATCC 33970) (Agrobacterium tumefaciens (strain C58))).